Here is a 712-residue protein sequence, read N- to C-terminus: Glucans biosynthesis glucosyltransferase H (712 aa).

6 helical membrane-spanning segments follow: residues 57 to 77 (LAIMLATAALTCAGGYEMYQV), 89 to 109 (IVLALFAALFAWVALSFVSAL), 408 to 428 (GIGSYITAPMWLAFLVAGILI), 462 to 482 (FAGTMGLLMMPKLLALILVVI), 552 to 572 (YAAPSWLGAVMAVSALLVSWP), and 573 to 593 (LLLWMMPVILGLVLAIPVALL).

Belongs to the glycosyltransferase 2 family. OpgH subfamily.

It is found in the cell inner membrane. Its pathway is glycan metabolism; osmoregulated periplasmic glucan (OPG) biosynthesis. Involved in the biosynthesis of osmoregulated periplasmic glucans (OPGs). This chain is Glucans biosynthesis glucosyltransferase H, found in Rhodopseudomonas palustris (strain BisA53).